Here is an 88-residue protein sequence, read N- to C-terminus: Sm-like protein LSM5 (88 aa).

Ala2 is subject to N-acetylalanine. The Sm domain occupies 9 to 84; it reads LPSELIDRCI…IAILVPGGSP (76 aa).

Belongs to the snRNP Sm proteins family. Component of the heptameric LSM1-LSM7 complex that forms a seven-membered ring structure with a donut shape. The LSM subunits are arranged in the order LSM1, LSM2, LSM3, LSM6, LSM5, LSM7 and LSM4. Component of the heptameric LSM2-LSM8 complex that forms a seven-membered ring structure with a donut shape. The LSM subunits are arranged in the order LSM8, LSM2, LSM3, LSM6, LSM5, LSM7 and LSM4. LSM2 subunit interacts only with its two neighboring subunits, LSM6A or LSM6B and LSM7. In terms of tissue distribution, expressed in roots, leaves, stems, flowers and siliques.

It is found in the cytoplasm. The protein resides in the nucleus. In terms of biological role, component of LSM protein complexes, which are involved in RNA processing. Component of the cytoplasmic LSM1-LSM7 complex which is involved in mRNA degradation by promoting decapping and leading to accurate 5'-3' mRNA decay. The cytoplasmic LSM1-LSM7 complex regulates developmental gene expression by the decapping of specific development-related transcripts. Component of the nuclear LSM2-LSM8 complex which is involved splicing nuclear mRNAs. LSM2-LSM8 binds directly to the U6 small nuclear RNAs (snRNAs) and is essential for accurate splicing of selected development-related mRNAs through the stabilization of the spliceosomal U6 snRNA. Plays a critical role in the regulation of development-related gene expression. Involved in the control of plant sensitivity to abscisic acid (ABA) and drought. Functions with ABH1 as negative regulator of ABA signaling in guard cells. Required for regulation of splicing efficiency of many stress-responsive genes under stress conditions. This Arabidopsis thaliana (Mouse-ear cress) protein is Sm-like protein LSM5.